The chain runs to 51 residues: MARNKPLAKKLRLAKALKQNRRVPVWVIVKTNRRVLTHPKRRYWRRTKLKE.

This sequence belongs to the eukaryotic ribosomal protein eL39 family. Part of the 50S ribosomal subunit.

The sequence is that of Large ribosomal subunit protein eL39 from Pyrococcus furiosus (strain ATCC 43587 / DSM 3638 / JCM 8422 / Vc1).